The chain runs to 620 residues: MYND-type zinc finger protein MUB1 (620 aa).

Residues 514–555 (NFSCGKWEDFPRQFAKCRRCKRTKYCSRKCQLKAWGYHRYWC) form an MYND-type; degenerate zinc finger. Zn(2+) contacts are provided by cysteine 530, cysteine 533, histidine 551, and cysteine 555. Residues 563-606 (MRSTNTTTGVNTPNEPSSLNATATTAADVSNSTSTFTPNISTTV) show a composition bias toward polar residues. Residues 563–620 (MRSTNTTTGVNTPNEPSSLNATATTAADVSNSTSTFTPNISTTVPDEISNRDENSIPE) are disordered. Basic and acidic residues predominate over residues 610–620 (ISNRDENSIPE).

The protein belongs to the MUB1/samB family. In terms of assembly, interacts with UBR2 and RPN4.

It is found in the cytoplasm. In terms of biological role, involved in the determination of the onset of polarized growth. Required for the ubiquitin-dependent degradation of RPN4. Cooperates with UBR2 to transfer ubiquitin from RAD6 to RPN4. This Saccharomyces cerevisiae (strain ATCC 204508 / S288c) (Baker's yeast) protein is MYND-type zinc finger protein MUB1 (MUB1).